Here is a 286-residue protein sequence, read N- to C-terminus: 4-hydroxybenzoate octaprenyltransferase (286 aa).

The next 8 helical transmembrane spans lie at 20 to 40 (IGTF…AGGM), 43 to 63 (LKVL…GCII), 95 to 115 (ILFV…NPLV), 116 to 136 (VQLS…KRFT), 142 to 162 (FLGV…LGTV), 167 to 187 (WWLF…YAMV), 210 to 230 (QIIG…GLSA), and 235 to 255 (VFAL…KLIF).

The protein belongs to the UbiA prenyltransferase family. Mg(2+) serves as cofactor.

The protein localises to the cell inner membrane. It carries out the reaction all-trans-octaprenyl diphosphate + 4-hydroxybenzoate = 4-hydroxy-3-(all-trans-octaprenyl)benzoate + diphosphate. The protein operates within cofactor biosynthesis; ubiquinone biosynthesis. Catalyzes the prenylation of para-hydroxybenzoate (PHB) with an all-trans polyprenyl group. Mediates the second step in the final reaction sequence of ubiquinone-8 (UQ-8) biosynthesis, which is the condensation of the polyisoprenoid side chain with PHB, generating the first membrane-bound Q intermediate 3-octaprenyl-4-hydroxybenzoate. This is 4-hydroxybenzoate octaprenyltransferase from Shewanella loihica (strain ATCC BAA-1088 / PV-4).